Here is a 338-residue protein sequence, read N- to C-terminus: Methionine synthase (338 aa).

Residues histidine 210, cysteine 212, glutamate 234, and cysteine 294 each coordinate Zn(2+).

It belongs to the archaeal MetE family. It depends on Zn(2+) as a cofactor.

The protein operates within amino-acid biosynthesis; L-methionine biosynthesis via de novo pathway. Functionally, catalyzes the transfer of a methyl group to L-homocysteine resulting in methionine formation. The physiological methyl donor is unknown. The sequence is that of Methionine synthase from Pyrococcus furiosus (strain ATCC 43587 / DSM 3638 / JCM 8422 / Vc1).